We begin with the raw amino-acid sequence, 95 residues long: Protein TusB (95 aa).

Belongs to the DsrH/TusB family. In terms of assembly, heterohexamer, formed by a dimer of trimers. The hexameric TusBCD complex contains 2 copies each of TusB, TusC and TusD. The TusBCD complex interacts with TusE.

The protein localises to the cytoplasm. Functionally, part of a sulfur-relay system required for 2-thiolation of 5-methylaminomethyl-2-thiouridine (mnm(5)s(2)U) at tRNA wobble positions. The sequence is that of Protein TusB from Escherichia coli O81 (strain ED1a).